Reading from the N-terminus, the 125-residue chain is Small ribosomal subunit protein uS13 (125 aa).

It belongs to the universal ribosomal protein uS13 family. Part of the 30S ribosomal subunit. Forms a loose heterodimer with protein S19. Forms two bridges to the 50S subunit in the 70S ribosome.

Located at the top of the head of the 30S subunit, it contacts several helices of the 16S rRNA. In the 70S ribosome it contacts the 23S rRNA (bridge B1a) and protein L5 of the 50S subunit (bridge B1b), connecting the 2 subunits; these bridges are implicated in subunit movement. Contacts the tRNAs in the A and P-sites. The sequence is that of Small ribosomal subunit protein uS13 from Rickettsia rickettsii (strain Iowa).